A 589-amino-acid polypeptide reads, in one-letter code: ATP-dependent lipid A-core flippase (589 aa).

Transmembrane regions (helical) follow at residues 29–49, 68–88, 157–177, 254–274, and 283–303; these read WLLVVAACGALLEAVAGSTFL, ALWLPLGIVGLFLLRGIAGYI, VIGALVVMLWYSWTVTLAILL, ISSAAVQLLGAVGLAMLLLIA, and LSPGDFVSLMTSMIAVIPALK. In terms of domain architecture, ABC transmembrane type-1 spans 32–314; it reads VVAACGALLE…LTNVQNMLQS (283 aa). An ABC transporter domain is found at 346–582; that stretch reads IEFRGITARY…DGLYAYLYSM (237 aa). 380–387 contributes to the ATP binding site; it reads GRSGSGKS.

Belongs to the ABC transporter superfamily. Lipid exporter (TC 3.A.1.106) family. In terms of assembly, homodimer.

Its subcellular location is the cell inner membrane. The catalysed reaction is ATP + H2O + lipid A-core oligosaccharideSide 1 = ADP + phosphate + lipid A-core oligosaccharideSide 2.. Its function is as follows. Involved in lipopolysaccharide (LPS) biosynthesis. Translocates lipid A-core from the inner to the outer leaflet of the inner membrane. Transmembrane domains (TMD) form a pore in the inner membrane and the ATP-binding domain (NBD) is responsible for energy generation. The chain is ATP-dependent lipid A-core flippase from Xylella fastidiosa (strain Temecula1 / ATCC 700964).